Consider the following 271-residue polypeptide: tRNA (guanine-N(1)-)-methyltransferase (271 aa).

Residues Gly120 and 145–150 (IGDYVL) each bind S-adenosyl-L-methionine.

This sequence belongs to the RNA methyltransferase TrmD family. In terms of assembly, homodimer.

It is found in the cytoplasm. It catalyses the reaction guanosine(37) in tRNA + S-adenosyl-L-methionine = N(1)-methylguanosine(37) in tRNA + S-adenosyl-L-homocysteine + H(+). Functionally, specifically methylates guanosine-37 in various tRNAs. In Bifidobacterium longum (strain NCC 2705), this protein is tRNA (guanine-N(1)-)-methyltransferase.